A 792-amino-acid polypeptide reads, in one-letter code: MTKKRTVKRKVKEPEPTKEQPSVSEQSENEEDEDLLQAVKDPGEDTTDDEGIDQEYQSDSSEDLEFESDEEGNYLGRKVSNEAEEGEDDQDEDDDEDEDEGEDEDDDSDDDSEESDANEASATPKDDQPSSSKAAAAQTKEPIIQIIPRDPSKPEYEESDTSDEEDIRNTVGNIPMHWYDEYKHIGYDWDAKKIIKPPKGDQIDDFLRKIEDPNFWRTVKDPMTGQEVLLTDEDIALIKRVNSSRIPNPEHDEYAPWIEWFTSEVEKMPIKNVPDHKRSFLPSVSEKKKVSRMVHALKMGWMKTTEEVEREKQQKRGPKFYMLWETDTGREHMRRIHDPVSAPKRDLPGHAESYNPPPEYLFDEKETKEWLKLKDEPHKRKLHFMPQKYKSLRAVPAYSRYLRERFLRCLDLYLCPRAKRVKLNIDAEYLIPKLPSPRDLQPFPTVESLVYRGHTDLVRSVSVEPKGEYLVSGSDDKTVKIWEIATGRCIRTIETNDVVRCVAWCPNAKLSIIAVATGSRLLLINPKVGDKLLIKKTDDLLAESPNLDIIESERIKTAVQWSNAEPDEQEKGVRVVITHFKPIRQVTWHGRGDYLATVMPEGANRSALIHQLSKRRSQIPFSKSKGLIQCVLFHPVKPCFFVATQHNIRIYDLVKQELIKKLLTNSKWISGMSIHPKGDNLLVSTYDKKMLWFDLDLSTKPYQTMRLHRNAVRSVAFHLRYPLFASGSDDQAVIVSHGMVYNDLLQNPLIVPLKKLQTHEKRDEFGVLDVTWHPVQPWVFSTGADCTIRLYT.

Basic residues predominate over residues 1–11 (MTKKRTVKRKV). The segment at 1–167 (MTKKRTVKRK…ESDTSDEEDI (167 aa)) is disordered. Composition is skewed to acidic residues over residues 44–53 (EDTTDDEGID), 60–72 (SSED…DEEG), 82–117 (EAEE…ESDA), and 157–166 (EESDTSDEED). WD repeat units follow at residues 453–494 (GHTD…RTIE), 496–534 (NDVV…KLLI), 578–620 (THFK…SQIP), 623–661 (KSKG…LIKK), 664–703 (TNSK…KPYQ), 707–746 (LHRN…DLLQ), and 762–792 (RDEF…RLYT).

The protein belongs to the WD repeat BOP1/ERB1 family.

The protein localises to the nucleus. The protein resides in the nucleolus. It is found in the nucleoplasm. In terms of biological role, required for maturation of ribosomal RNAs and formation of the large ribosomal subunit. This chain is Ribosome biogenesis protein BOP1 homolog, found in Drosophila mojavensis (Fruit fly).